Here is a 90-residue protein sequence, read N- to C-terminus: DNA-directed RNA polymerase subunit omega (90 aa).

It belongs to the RNA polymerase subunit omega family. In terms of assembly, the RNAP catalytic core consists of 2 alpha, 1 beta, 1 beta' and 1 omega subunit. When a sigma factor is associated with the core the holoenzyme is formed, which can initiate transcription.

It carries out the reaction RNA(n) + a ribonucleoside 5'-triphosphate = RNA(n+1) + diphosphate. In terms of biological role, promotes RNA polymerase assembly. Latches the N- and C-terminal regions of the beta' subunit thereby facilitating its interaction with the beta and alpha subunits. The sequence is that of DNA-directed RNA polymerase subunit omega from Histophilus somni (strain 129Pt) (Haemophilus somnus).